The primary structure comprises 325 residues: ATP phosphoribosyltransferase (325 aa).

This sequence belongs to the ATP phosphoribosyltransferase family. Long subfamily. The cofactor is Mg(2+).

The protein resides in the cytoplasm. It carries out the reaction 1-(5-phospho-beta-D-ribosyl)-ATP + diphosphate = 5-phospho-alpha-D-ribose 1-diphosphate + ATP. Its pathway is amino-acid biosynthesis; L-histidine biosynthesis; L-histidine from 5-phospho-alpha-D-ribose 1-diphosphate: step 1/9. Feedback inhibited by histidine. Functionally, catalyzes the condensation of ATP and 5-phosphoribose 1-diphosphate to form N'-(5'-phosphoribosyl)-ATP (PR-ATP). Has a crucial role in the pathway because the rate of histidine biosynthesis seems to be controlled primarily by regulation of HisG enzymatic activity. The chain is ATP phosphoribosyltransferase from Rhodopseudomonas palustris (strain BisB18).